Consider the following 218-residue polypeptide: Hypoxanthine-guanine phosphoribosyltransferase (218 aa).

K69 is a GMP binding site. K103 is subject to N6-acetyllysine. K115 is covalently cross-linked (Glycyl lysine isopeptide (Lys-Gly) (interchain with G-Cter in SUMO1); alternate). A Glycyl lysine isopeptide (Lys-Gly) (interchain with G-Cter in SUMO2); alternate cross-link involves residue K115. GMP-binding positions include 134–142 (EDIIDTGKT), K166, 186–188 (KFV), and D194. D138 functions as the Proton acceptor in the catalytic mechanism. At T142 the chain carries Phosphothreonine. D194 serves as a coordination point for Mg(2+).

It belongs to the purine/pyrimidine phosphoribosyltransferase family. As to quaternary structure, homotetramer. Mg(2+) is required as a cofactor.

It localises to the cytoplasm. The catalysed reaction is IMP + diphosphate = hypoxanthine + 5-phospho-alpha-D-ribose 1-diphosphate. It catalyses the reaction GMP + diphosphate = guanine + 5-phospho-alpha-D-ribose 1-diphosphate. Its pathway is purine metabolism; IMP biosynthesis via salvage pathway; IMP from hypoxanthine: step 1/1. Converts guanine to guanosine monophosphate, and hypoxanthine to inosine monophosphate. Transfers the 5-phosphoribosyl group from 5-phosphoribosylpyrophosphate onto the purine. Plays a central role in the generation of purine nucleotides through the purine salvage pathway. In Rattus norvegicus (Rat), this protein is Hypoxanthine-guanine phosphoribosyltransferase (Hprt1).